Consider the following 304-residue polypeptide: Porphobilinogen deaminase (304 aa).

C240 is modified (S-(dipyrrolylmethanemethyl)cysteine).

The protein belongs to the HMBS family. In terms of assembly, monomer. It depends on dipyrromethane as a cofactor.

The enzyme catalyses 4 porphobilinogen + H2O = hydroxymethylbilane + 4 NH4(+). It functions in the pathway porphyrin-containing compound metabolism; protoporphyrin-IX biosynthesis; coproporphyrinogen-III from 5-aminolevulinate: step 2/4. Functionally, tetrapolymerization of the monopyrrole PBG into the hydroxymethylbilane pre-uroporphyrinogen in several discrete steps. This chain is Porphobilinogen deaminase, found in Xanthomonas campestris pv. campestris (strain B100).